Here is a 262-residue protein sequence, read N- to C-terminus: Flap endonuclease Xni (262 aa).

Mg(2+) is bound at residue D105. A 5'-3' exonuclease domain is found at 162–257; sequence ERSQFLDLMA…FRVIDSPPEK (96 aa). K(+)-binding residues include L172, A173, P181, I183, and I186. The interaction with DNA stretch occupies residues 185 to 190; that stretch reads GIGPKS.

The protein belongs to the Xni family. It depends on Mg(2+) as a cofactor. Requires K(+) as cofactor.

In terms of biological role, has flap endonuclease activity. During DNA replication, flap endonucleases cleave the 5'-overhanging flap structure that is generated by displacement synthesis when DNA polymerase encounters the 5'-end of a downstream Okazaki fragment. This is Flap endonuclease Xni from Shewanella baltica (strain OS223).